A 462-amino-acid polypeptide reads, in one-letter code: Calcitonin gene-related peptide type 1 receptor (462 aa).

The signal sequence occupies residues Met1 to Ala22. The Extracellular segment spans residues Glu23 to Leu140. 3 cysteine pairs are disulfide-bonded: Cys49–Cys75, Cys66–Cys106, and Cys89–Cys128. 3 N-linked (GlcNAc...) asparagine glycosylation sites follow: Asn67, Asn119, and Asn124. Residues Asn141–Phe165 form a helical membrane-spanning segment. Residues Tyr166 to Thr176 are Cytoplasmic-facing. Residues Leu177–Val199 traverse the membrane as a helical segment. The Extracellular portion of the chain corresponds to Ala200–Pro210. Residues Val211–His239 form a helical membrane-spanning segment. Over Thr240–Leu253 the chain is Cytoplasmic. Residues Met254–Ala274 form a helical membrane-spanning segment. The Extracellular segment spans residues Arg275 to His290. A required for RAMP3 interaction region spans residues Thr289–His290. Residues Leu291–Arg315 traverse the membrane as a helical segment. The Cytoplasmic portion of the chain corresponds to Val316–Asn330. The helical transmembrane segment at Leu331–Leu352 threads the bilayer. Residues Ile353–Asp367 are Extracellular-facing. A helical membrane pass occupies residues Tyr368–Phe388. Residues Asn389–Asp462 lie on the Cytoplasmic side of the membrane. Phosphoserine is present on residues Ser421 and Ser446.

This sequence belongs to the G-protein coupled receptor 2 family. Heterodimer of CALCRL and RAMP1; the receptor complex functions as CGRP receptor. Heterodimer of CALCRL and RAMP2 or CALCRL and RAMP3; the complexes function as adrenomedullin receptor. In terms of tissue distribution, detected in lung and coronary artery.

Its subcellular location is the cell membrane. Its function is as follows. G protein-coupled receptor which specificity is determined by its interaction with receptor-activity-modifying proteins (RAMPs). Together with RAMP1, form the receptor complex for calcitonin-gene-related peptides CALCA/CGRP1 and CALCB/CGRP2. Together with RAMP2 or RAMP3, function as receptor complexes for adrenomedullin (ADM and ADM2). Ligand binding causes a conformation change that triggers signaling via guanine nucleotide-binding proteins (G proteins) and modulates the activity of downstream effectors. Activates cAMP-dependent pathway. In Sus scrofa (Pig), this protein is Calcitonin gene-related peptide type 1 receptor (CALCRL).